A 392-amino-acid chain; its full sequence is 5-azacytidine-induced protein 2 (392 aa).

Residues 1 to 197 are homodimerization; the sequence is MDALVEDDIC…IELQKAKQTD (197 aa). Coiled coils occupy residues 40–76 and 102–196; these read ALVTAYEDIKKRLKDSEKENSLLKKRIRFLEEKLIAR and DRDN…AKQT. The interaction with TBK1 and IKBKE stretch occupies residues 216–257; it reads SDNMQHAYWELKREMSNLHLVTQVQAELLRKLKTSTAIKKAC. Phosphoserine is present on residues Ser-318 and Ser-353.

As to quaternary structure, homodimer. Interacts with IKBKE. Interacts with TBK1. Interacts with TICAM1. Interacts with TAX1BP1. Interacts with CALCOCO2. (Microbial infection) Interacts with vaccinia virus protein C6. In terms of processing, ubiquitinated via 'Lys-48'-linked polyubiquitination by TRIM38, leading to its degradation. As to expression, widely expressed. Abundant expression seen in the pancreas and testis.

The protein localises to the cytoplasm. In terms of biological role, adapter protein which binds TBK1 and IKBKE playing a role in antiviral innate immunity. Activates serine/threonine-protein kinase TBK1 and facilitates its oligomerization. Enhances the phosphorylation of NF-kappa-B p65 subunit RELA by TBK1. Promotes TBK1-induced as well as TNF-alpha or PMA-induced activation of NF-kappa-B. Participates in IFNB promoter activation via TICAM1. This chain is 5-azacytidine-induced protein 2 (AZI2), found in Homo sapiens (Human).